The following is a 168-amino-acid chain: Peptide methionine sulfoxide reductase MsrA 2 (168 aa).

The active site involves cysteine 11.

The protein belongs to the MsrA Met sulfoxide reductase family.

The enzyme catalyses L-methionyl-[protein] + [thioredoxin]-disulfide + H2O = L-methionyl-(S)-S-oxide-[protein] + [thioredoxin]-dithiol. It catalyses the reaction [thioredoxin]-disulfide + L-methionine + H2O = L-methionine (S)-S-oxide + [thioredoxin]-dithiol. Functionally, has an important function as a repair enzyme for proteins that have been inactivated by oxidation. Catalyzes the reversible oxidation-reduction of methionine sulfoxide in proteins to methionine. The protein is Peptide methionine sulfoxide reductase MsrA 2 of Rhodopirellula baltica (strain DSM 10527 / NCIMB 13988 / SH1).